Consider the following 134-residue polypeptide: Ribosome-binding factor A (134 aa).

Belongs to the RbfA family. Monomer. Binds 30S ribosomal subunits, but not 50S ribosomal subunits or 70S ribosomes.

It localises to the cytoplasm. One of several proteins that assist in the late maturation steps of the functional core of the 30S ribosomal subunit. Associates with free 30S ribosomal subunits (but not with 30S subunits that are part of 70S ribosomes or polysomes). Required for efficient processing of 16S rRNA. May interact with the 5'-terminal helix region of 16S rRNA. This is Ribosome-binding factor A from Parasynechococcus marenigrum (strain WH8102).